A 392-amino-acid polypeptide reads, in one-letter code: Alanine--glyoxylate aminotransferase (392 aa).

The residue at position 209 (Lys209) is an N6-(pyridoxal phosphate)lysine. Residue Lys225 is modified to N6-acetyllysine; alternate. The residue at position 225 (Lys225) is an N6-succinyllysine; alternate. N6-acetyllysine occurs at positions 234 and 312. Arg360 provides a ligand contact to substrate. The short motif at 390 to 392 is the Microbody targeting signal element; the sequence is SQL.

This sequence belongs to the class-V pyridoxal-phosphate-dependent aminotransferase family. In terms of assembly, homodimer. Pyridoxal 5'-phosphate serves as cofactor.

The protein localises to the peroxisome. It carries out the reaction L-serine + pyruvate = 3-hydroxypyruvate + L-alanine. The enzyme catalyses glyoxylate + L-alanine = glycine + pyruvate. In terms of biological role, peroxisomal aminotransferase that catalyzes the transamination of glyoxylate to glycine and contributes to the glyoxylate detoxification. Also catalyzes the transamination between L-serine and pyruvate and contributes to gluconeogenesis from the L-serine metabolism. In Oryctolagus cuniculus (Rabbit), this protein is Alanine--glyoxylate aminotransferase.